A 422-amino-acid chain; its full sequence is Histidinol dehydrogenase (422 aa).

Tyrosine 123, glutamine 183, and asparagine 206 together coordinate NAD(+). 3 residues coordinate substrate: serine 229, glutamine 251, and histidine 254. 2 residues coordinate Zn(2+): glutamine 251 and histidine 254. Catalysis depends on proton acceptor residues glutamate 320 and histidine 321. Substrate contacts are provided by histidine 321, aspartate 354, glutamate 408, and histidine 413. Residue aspartate 354 coordinates Zn(2+). A Zn(2+)-binding site is contributed by histidine 413.

It belongs to the histidinol dehydrogenase family. It depends on Zn(2+) as a cofactor.

The catalysed reaction is L-histidinol + 2 NAD(+) + H2O = L-histidine + 2 NADH + 3 H(+). Its pathway is amino-acid biosynthesis; L-histidine biosynthesis; L-histidine from 5-phospho-alpha-D-ribose 1-diphosphate: step 9/9. Catalyzes the sequential NAD-dependent oxidations of L-histidinol to L-histidinaldehyde and then to L-histidine. In Haloarcula marismortui (strain ATCC 43049 / DSM 3752 / JCM 8966 / VKM B-1809) (Halobacterium marismortui), this protein is Histidinol dehydrogenase.